We begin with the raw amino-acid sequence, 308 residues long: Aspartate carbamoyltransferase catalytic subunit (308 aa).

Residues arginine 49 and threonine 50 each contribute to the carbamoyl phosphate site. Lysine 77 lines the L-aspartate pocket. Carbamoyl phosphate is bound by residues arginine 99, histidine 127, and glutamine 130. The L-aspartate site is built by arginine 160 and arginine 211. Carbamoyl phosphate contacts are provided by alanine 252 and proline 253.

Belongs to the aspartate/ornithine carbamoyltransferase superfamily. ATCase family. Heterododecamer (2C3:3R2) of six catalytic PyrB chains organized as two trimers (C3), and six regulatory PyrI chains organized as three dimers (R2).

The catalysed reaction is carbamoyl phosphate + L-aspartate = N-carbamoyl-L-aspartate + phosphate + H(+). Its pathway is pyrimidine metabolism; UMP biosynthesis via de novo pathway; (S)-dihydroorotate from bicarbonate: step 2/3. Catalyzes the condensation of carbamoyl phosphate and aspartate to form carbamoyl aspartate and inorganic phosphate, the committed step in the de novo pyrimidine nucleotide biosynthesis pathway. The polypeptide is Aspartate carbamoyltransferase catalytic subunit (Bacillus caldolyticus).